The sequence spans 81 residues: Short neurotoxin 2 (81 aa).

The N-terminal stretch at 1 to 21 is a signal peptide; that stretch reads MKTLLLTLVVVTIVCLDLGYT. 4 disulfides stabilise this stretch: C24–C43, C38–C60, C62–C73, and C74–C79.

Belongs to the three-finger toxin family. Short-chain subfamily. Type I alpha-neurotoxin sub-subfamily. In terms of tissue distribution, expressed by the venom gland.

Its subcellular location is the secreted. Binds to muscle nicotinic acetylcholine receptor (nAChR) and inhibit acetylcholine from binding to the receptor, thereby impairing neuromuscular transmission. This chain is Short neurotoxin 2, found in Tropidechis carinatus (Australian rough-scaled snake).